A 649-amino-acid chain; its full sequence is Acetyl-coenzyme A synthetase (649 aa).

CoA is bound by residues 189–192 (RGGK), Thr-311, and Asn-335. ATP-binding positions include 387–389 (GEP), 411–416 (DTWWQT), Asp-500, and Arg-515. Residue Ser-523 participates in CoA binding. An ATP-binding site is contributed by Arg-526. Residues Val-537, His-539, and Val-542 each coordinate Mg(2+). Arg-584 is a CoA binding site. N6-acetyllysine is present on Lys-609.

It belongs to the ATP-dependent AMP-binding enzyme family. Mg(2+) serves as cofactor. In terms of processing, acetylated. Deacetylation by the SIR2-homolog deacetylase activates the enzyme.

The enzyme catalyses acetate + ATP + CoA = acetyl-CoA + AMP + diphosphate. Functionally, catalyzes the conversion of acetate into acetyl-CoA (AcCoA), an essential intermediate at the junction of anabolic and catabolic pathways. AcsA undergoes a two-step reaction. In the first half reaction, AcsA combines acetate with ATP to form acetyl-adenylate (AcAMP) intermediate. In the second half reaction, it can then transfer the acetyl group from AcAMP to the sulfhydryl group of CoA, forming the product AcCoA. The chain is Acetyl-coenzyme A synthetase from Sinorhizobium fredii (strain NBRC 101917 / NGR234).